The chain runs to 383 residues: U-box domain-containing protein 63 (383 aa).

The disordered stretch occupies residues 166-186 (PDGNVSNSHRNTQQKRDFASV). The U-box domain maps to 201-273 (SLKAILSDPV…HAFRQEEDSD (73 aa)).

The enzyme catalyses S-ubiquitinyl-[E2 ubiquitin-conjugating enzyme]-L-cysteine + [acceptor protein]-L-lysine = [E2 ubiquitin-conjugating enzyme]-L-cysteine + N(6)-ubiquitinyl-[acceptor protein]-L-lysine.. The protein operates within protein modification; protein ubiquitination. Functionally, functions as an E3 ubiquitin ligase. In Arabidopsis thaliana (Mouse-ear cress), this protein is U-box domain-containing protein 63 (PUB63).